The primary structure comprises 214 residues: Urease accessory protein UreG (214 aa).

23–30 (GPVGSGKT) contacts GTP.

This sequence belongs to the SIMIBI class G3E GTPase family. UreG subfamily. In terms of assembly, homodimer. UreD, UreF and UreG form a complex that acts as a GTP-hydrolysis-dependent molecular chaperone, activating the urease apoprotein by helping to assemble the nickel containing metallocenter of UreC. The UreE protein probably delivers the nickel.

The protein resides in the cytoplasm. In terms of biological role, facilitates the functional incorporation of the urease nickel metallocenter. This process requires GTP hydrolysis, probably effectuated by UreG. The polypeptide is Urease accessory protein UreG (Bordetella bronchiseptica (strain ATCC BAA-588 / NCTC 13252 / RB50) (Alcaligenes bronchisepticus)).